We begin with the raw amino-acid sequence, 221 residues long: Small ribosomal subunit protein uS3c (221 aa).

In terms of domain architecture, KH type-2 spans 39–109 (LRDYLKTRLA…RVIVHVVEIA (71 aa)).

It belongs to the universal ribosomal protein uS3 family. Part of the 30S ribosomal subunit.

It is found in the plastid. The protein localises to the chloroplast. The chain is Small ribosomal subunit protein uS3c (rps3) from Nephroselmis olivacea (Green alga).